A 291-amino-acid chain; its full sequence is ATP synthase gamma chain (291 aa).

It belongs to the ATPase gamma chain family. F-type ATPases have 2 components, CF(1) - the catalytic core - and CF(0) - the membrane proton channel. CF(1) has five subunits: alpha(3), beta(3), gamma(1), delta(1), epsilon(1). CF(0) has three main subunits: a, b and c.

The protein resides in the cell inner membrane. In terms of biological role, produces ATP from ADP in the presence of a proton gradient across the membrane. The gamma chain is believed to be important in regulating ATPase activity and the flow of protons through the CF(0) complex. This is ATP synthase gamma chain from Persephonella marina (strain DSM 14350 / EX-H1).